Consider the following 444-residue polypeptide: MATVILFVAWMACLMVGVCYQEFQTQQNFPDISNPSQELNQEPAHRIVQLDSIQNNGALNMSTGNVLNMSPPPPSPCLSRAKIRHAFKYVTTILSCVIFLVGIVGNSTLLRIIYKNKCMRNGPNVLIASLALGDLFYILIAIPIISISFWLSTGHSEYIYQLVHLYRARVYSLSLCALSIDRYRAVASWNRIRSIGIPVRKAIELTLIWAVAIIVAVPEAIAFNLVELDFRGQTILVCMLPMEQTSDFMRFYQEVKVWWLFGFYFCLPLACTGVFYTLMSCEMLSIKNGMRIALNDHMKQRREVAKTVFCLVVIFALCWLPLHVSSIFVRLSATVKRACILKNKRSCIMAEIQTGVNYQLLMVMNYTGINMASLNSCIGPVALYFVSRKFKNCFQSCLCCWCHRPTLTITPMDEKGSGGKWKANGHDLDLDRSSSRLSNKYSSS.

Positions 1–18 (MATVILFVAWMACLMVGV) are cleaved as a signal peptide. Residues 19–88 (CYQEFQTQQN…SRAKIRHAFK (70 aa)) are Extracellular-facing. A glycan (N-linked (GlcNAc...) asparagine) is linked at N60. A helical membrane pass occupies residues 89-113 (YVTTILSCVIFLVGIVGNSTLLRII). At 114-124 (YKNKCMRNGPN) the chain is on the cytoplasmic side. A helical membrane pass occupies residues 125–145 (VLIASLALGDLFYILIAIPII). The Extracellular portion of the chain corresponds to 146 to 161 (SISFWLSTGHSEYIYQ). Residues 162-180 (LVHLYRARVYSLSLCALSI) form a helical membrane-spanning segment. Topologically, residues 181–201 (DRYRAVASWNRIRSIGIPVRK) are cytoplasmic. The chain crosses the membrane as a helical span at residues 202–226 (AIELTLIWAVAIIVAVPEAIAFNLV). The Extracellular segment spans residues 227-254 (ELDFRGQTILVCMLPMEQTSDFMRFYQE). The helical transmembrane segment at 255-279 (VKVWWLFGFYFCLPLACTGVFYTLM) threads the bilayer. Residues 280 to 307 (SCEMLSIKNGMRIALNDHMKQRREVAKT) lie on the Cytoplasmic side of the membrane. Residues 308–328 (VFCLVVIFALCWLPLHVSSIF) form a helical membrane-spanning segment. Residues 329–365 (VRLSATVKRACILKNKRSCIMAEIQTGVNYQLLMVMN) are Extracellular-facing. Residues 366–386 (YTGINMASLNSCIGPVALYFV) form a helical membrane-spanning segment. Residues 387–444 (SRKFKNCFQSCLCCWCHRPTLTITPMDEKGSGGKWKANGHDLDLDRSSSRLSNKYSSS) are Cytoplasmic-facing. Residues 416–444 (GSGGKWKANGHDLDLDRSSSRLSNKYSSS) are disordered. Over residues 424–434 (NGHDLDLDRSS) the composition is skewed to basic and acidic residues. Positions 435–444 (SRLSNKYSSS) are enriched in low complexity.

The protein belongs to the G-protein coupled receptor 1 family. Endothelin receptor subfamily.

The protein localises to the cell membrane. In terms of biological role, receptor for endothelin-3. Mediates its action by association with G proteins that activate a phosphatidylinositol-calcium second messenger system. The protein is Endothelin-3 receptor of Xenopus laevis (African clawed frog).